Here is a 146-residue protein sequence, read N- to C-terminus: Large ribosomal subunit protein uL15 (146 aa).

The span at 1–13 (MKLHELKPAEGSR) shows a compositional bias: basic and acidic residues. Positions 1–52 (MKLHELKPAEGSRKVRNRVGRGIGSGNGKTAGKGHKGQNARSGGGVRLGFEG) are disordered. 2 stretches are compositionally biased toward gly residues: residues 21–31 (RGIGSGNGKTA) and 42–52 (SGGGVRLGFEG).

It belongs to the universal ribosomal protein uL15 family. As to quaternary structure, part of the 50S ribosomal subunit.

In terms of biological role, binds to the 23S rRNA. The sequence is that of Large ribosomal subunit protein uL15 from Bacillus anthracis (strain A0248).